We begin with the raw amino-acid sequence, 396 residues long: (S)-8-oxocitronellyl enol synthase ISY2 (396 aa).

Residues 38 to 40 (TGL), 66 to 67 (RR), 84 to 85 (DV), 108 to 109 (TW), Gln146, Tyr182, Ile209, and 216 to 218 (SMM) contribute to the NADP(+) site. Residue Tyr182 is part of the active site.

The protein belongs to the short-chain dehydrogenases/reductases (SDR) family.

It carries out the reaction (S)-8-oxocitronellyl enol + NADP(+) = (6E)-8-oxogeranial + NADPH + H(+). The enzyme catalyses (S)-8-oxocitronellyl enol + NAD(+) = (6E)-8-oxogeranial + NADH + H(+). Functionally, iridoid synthase that catalyzes the first step in generation of the iridoid ring scaffold using the linear monoterpene (6E)-8-oxogeranial as substrate. Iridoids comprise a large family of distinctive bicyclic monoterpenes that possess a wide range of pharmacological activities, including anticancer, anti-inflammatory, antifungal and antibacterial activities. Catalyzes the conversion of the linear monoterpene (6E)-8-oxogeranial to (S)-8-oxocitronellyl enol, a precursor of nepetalactones, which are metabolites that are both insect-repellent and have euphoric effect in cats. This chain is (S)-8-oxocitronellyl enol synthase ISY2, found in Nepeta racemosa (Catmint).